Reading from the N-terminus, the 220-residue chain is Thiamine-phosphate synthase (220 aa).

4-amino-2-methyl-5-(diphosphooxymethyl)pyrimidine-binding positions include 47 to 51 (QYREK) and asparagine 78. Residues aspartate 79 and aspartate 98 each coordinate Mg(2+). Serine 117 contacts 4-amino-2-methyl-5-(diphosphooxymethyl)pyrimidine. 143–145 (TAT) contacts 2-[(2R,5Z)-2-carboxy-4-methylthiazol-5(2H)-ylidene]ethyl phosphate. Lysine 146 is a binding site for 4-amino-2-methyl-5-(diphosphooxymethyl)pyrimidine. Residues glycine 174 and 194 to 195 (IS) contribute to the 2-[(2R,5Z)-2-carboxy-4-methylthiazol-5(2H)-ylidene]ethyl phosphate site.

Belongs to the thiamine-phosphate synthase family. It depends on Mg(2+) as a cofactor.

The catalysed reaction is 2-[(2R,5Z)-2-carboxy-4-methylthiazol-5(2H)-ylidene]ethyl phosphate + 4-amino-2-methyl-5-(diphosphooxymethyl)pyrimidine + 2 H(+) = thiamine phosphate + CO2 + diphosphate. It carries out the reaction 2-(2-carboxy-4-methylthiazol-5-yl)ethyl phosphate + 4-amino-2-methyl-5-(diphosphooxymethyl)pyrimidine + 2 H(+) = thiamine phosphate + CO2 + diphosphate. It catalyses the reaction 4-methyl-5-(2-phosphooxyethyl)-thiazole + 4-amino-2-methyl-5-(diphosphooxymethyl)pyrimidine + H(+) = thiamine phosphate + diphosphate. The protein operates within cofactor biosynthesis; thiamine diphosphate biosynthesis; thiamine phosphate from 4-amino-2-methyl-5-diphosphomethylpyrimidine and 4-methyl-5-(2-phosphoethyl)-thiazole: step 1/1. In terms of biological role, condenses 4-methyl-5-(beta-hydroxyethyl)thiazole monophosphate (THZ-P) and 2-methyl-4-amino-5-hydroxymethyl pyrimidine pyrophosphate (HMP-PP) to form thiamine monophosphate (TMP). The polypeptide is Thiamine-phosphate synthase (Methanosarcina barkeri (strain Fusaro / DSM 804)).